A 105-amino-acid chain; its full sequence is MLHWISLLCAGCLEMAGVALMNQYAKEKSVKWVLLIIVGFAASFSLLSYAMETTPMGTAYAVWTGIGTAGGALIGILFYKEQKDAKRIFFIALILCSAVGLKILS.

4 consecutive transmembrane segments (helical) span residues 1–21, 32–52, 59–79, and 85–105; these read MLHW…VALM, WVLL…YAME, AYAV…ILFY, and AKRI…KILS.

It belongs to the drug/metabolite transporter (DMT) superfamily. Small multidrug resistance (SMR) (TC 2.A.7.1) family. YkkC/YkkD subfamily. As to quaternary structure, the efflux pump is composed of GdnC and GdnD.

It localises to the cell membrane. Functionally, probably involved in guanidinium transport. In vitro, confers resistance to a broad range of toxic compounds such as cationic dyes, neutral and anionic antimicrobials. This Bacillus subtilis (strain 168) protein is Probable guanidinium efflux system subunit GdnD.